Reading from the N-terminus, the 189-residue chain is Low affinity inorganic phosphate transporter 2 (189 aa).

The Cytoplasmic portion of the chain corresponds to 1-55 (TARYTALVAKDAKRAAADMGKVLHVEIDPEDAKVERMAKDESNQFGLFSWEFVRR). A helical transmembrane segment spans residues 56–76 (HGLHLFGTCSTWFLLDIAFYS). Residues 77–111 (QNLFQKDVFTAIGWIPPAKTMNAVQEVYKIARAQT) are Extracellular-facing. The helical transmembrane segment at 112–132 (LIALCSTVPGYWFTVAFIDII) threads the bilayer. The Cytoplasmic portion of the chain corresponds to 133 to 134 (GR). Residues 135 to 155 (FAIQLMGFFFMTVFMFAIAIP) form a helical membrane-spanning segment. Over 156 to 165 (YHHWTLQENR) the chain is Extracellular. Residues 166–186 (IGFVIMYSLTFFFANFGPNAT) traverse the membrane as a helical segment. The Cytoplasmic segment spans residues 187–189 (TFV).

Belongs to the major facilitator superfamily. Phosphate:H(+) symporter (TC 2.A.1.9) family.

The protein localises to the cell membrane. The catalysed reaction is phosphate(in) + H(+)(in) = phosphate(out) + H(+)(out). Low-affinity transporter for external inorganic phosphate (Pi). This chain is Low affinity inorganic phosphate transporter 2, found in Petunia hybrida (Petunia).